The sequence spans 309 residues: Ribonuclease Z (309 aa).

7 residues coordinate Zn(2+): His63, His65, Asp67, His68, His145, Asp216, and His274. Asp67 acts as the Proton acceptor in catalysis.

The protein belongs to the RNase Z family. In terms of assembly, homodimer. Zn(2+) is required as a cofactor.

It catalyses the reaction Endonucleolytic cleavage of RNA, removing extra 3' nucleotides from tRNA precursor, generating 3' termini of tRNAs. A 3'-hydroxy group is left at the tRNA terminus and a 5'-phosphoryl group is left at the trailer molecule.. Zinc phosphodiesterase, which displays some tRNA 3'-processing endonuclease activity. Probably involved in tRNA maturation, by removing a 3'-trailer from precursor tRNA. The protein is Ribonuclease Z of Streptococcus uberis (strain ATCC BAA-854 / 0140J).